The primary structure comprises 241 residues: Biosynthetic peptidoglycan transglycosylase (241 aa).

Residues 19-39 (AILAVLGVWIAGILLFSVMPV) traverse the membrane as a helical segment.

It belongs to the glycosyltransferase 51 family.

The protein localises to the cell inner membrane. It catalyses the reaction [GlcNAc-(1-&gt;4)-Mur2Ac(oyl-L-Ala-gamma-D-Glu-L-Lys-D-Ala-D-Ala)](n)-di-trans,octa-cis-undecaprenyl diphosphate + beta-D-GlcNAc-(1-&gt;4)-Mur2Ac(oyl-L-Ala-gamma-D-Glu-L-Lys-D-Ala-D-Ala)-di-trans,octa-cis-undecaprenyl diphosphate = [GlcNAc-(1-&gt;4)-Mur2Ac(oyl-L-Ala-gamma-D-Glu-L-Lys-D-Ala-D-Ala)](n+1)-di-trans,octa-cis-undecaprenyl diphosphate + di-trans,octa-cis-undecaprenyl diphosphate + H(+). It functions in the pathway cell wall biogenesis; peptidoglycan biosynthesis. Peptidoglycan polymerase that catalyzes glycan chain elongation from lipid-linked precursors. The polypeptide is Biosynthetic peptidoglycan transglycosylase (Cronobacter sakazakii (strain ATCC BAA-894) (Enterobacter sakazakii)).